We begin with the raw amino-acid sequence, 140 residues long: Nucleoside diphosphate kinase (140 aa).

ATP-binding residues include K11, F59, R87, T93, R104, and N114. Catalysis depends on H117, which acts as the Pros-phosphohistidine intermediate.

This sequence belongs to the NDK family. Homotetramer. Mg(2+) is required as a cofactor.

The protein localises to the cytoplasm. It carries out the reaction a 2'-deoxyribonucleoside 5'-diphosphate + ATP = a 2'-deoxyribonucleoside 5'-triphosphate + ADP. The enzyme catalyses a ribonucleoside 5'-diphosphate + ATP = a ribonucleoside 5'-triphosphate + ADP. Functionally, major role in the synthesis of nucleoside triphosphates other than ATP. The ATP gamma phosphate is transferred to the NDP beta phosphate via a ping-pong mechanism, using a phosphorylated active-site intermediate. In Sphingopyxis alaskensis (strain DSM 13593 / LMG 18877 / RB2256) (Sphingomonas alaskensis), this protein is Nucleoside diphosphate kinase.